The chain runs to 211 residues: Imidazole glycerol phosphate synthase subunit HisH (211 aa).

Positions 3–211 (VVAVIDYEMG…VSQVREKIAA (209 aa)) constitute a Glutamine amidotransferase type-1 domain. The active-site Nucleophile is Cys81. Active-site residues include His186 and Glu188.

As to quaternary structure, heterodimer of HisH and HisF.

Its subcellular location is the cytoplasm. It catalyses the reaction 5-[(5-phospho-1-deoxy-D-ribulos-1-ylimino)methylamino]-1-(5-phospho-beta-D-ribosyl)imidazole-4-carboxamide + L-glutamine = D-erythro-1-(imidazol-4-yl)glycerol 3-phosphate + 5-amino-1-(5-phospho-beta-D-ribosyl)imidazole-4-carboxamide + L-glutamate + H(+). The enzyme catalyses L-glutamine + H2O = L-glutamate + NH4(+). The protein operates within amino-acid biosynthesis; L-histidine biosynthesis; L-histidine from 5-phospho-alpha-D-ribose 1-diphosphate: step 5/9. IGPS catalyzes the conversion of PRFAR and glutamine to IGP, AICAR and glutamate. The HisH subunit catalyzes the hydrolysis of glutamine to glutamate and ammonia as part of the synthesis of IGP and AICAR. The resulting ammonia molecule is channeled to the active site of HisF. This is Imidazole glycerol phosphate synthase subunit HisH from Trichormus variabilis (strain ATCC 29413 / PCC 7937) (Anabaena variabilis).